Consider the following 168-residue polypeptide: uncharacterized protein (168 aa).

The next 4 helical transmembrane spans lie at 1–21 (MFWL…AVAR), 41–61 (PYII…VLLM), 68–88 (WWLG…WALC), and 123–143 (VILE…MCLF).

It is found in the cell membrane. This is an uncharacterized protein from Bacillus subtilis (strain 168).